Consider the following 389-residue polypeptide: uncharacterized protein (389 aa).

This is an uncharacterized protein from Treponema pallidum (strain Nichols).